Reading from the N-terminus, the 469-residue chain is Glutamate--tRNA ligase 2 (469 aa).

A 'HIGH' region motif is present at residues 11 to 21; it reads PSPTGHLHLGG. The short motif at 238 to 242 is the 'KMSKS' region element; sequence KLSKR. Lysine 241 lines the ATP pocket.

This sequence belongs to the class-I aminoacyl-tRNA synthetase family. Glutamate--tRNA ligase type 1 subfamily. Monomer.

It is found in the cytoplasm. The catalysed reaction is tRNA(Glu) + L-glutamate + ATP = L-glutamyl-tRNA(Glu) + AMP + diphosphate. Its function is as follows. Catalyzes the attachment of glutamate to tRNA(Glu) in a two-step reaction: glutamate is first activated by ATP to form Glu-AMP and then transferred to the acceptor end of tRNA(Glu). In Ehrlichia chaffeensis (strain ATCC CRL-10679 / Arkansas), this protein is Glutamate--tRNA ligase 2.